Consider the following 184-residue polypeptide: Vacuolar protein sorting-associated protein 68 (184 aa).

Met1 is modified (N-acetylmethionine). Position 8 is a phosphoserine (Ser8). Residues 26–46 traverse the membrane as a helical segment; sequence GVYLSGALYALGFWIFLDAVL. Residue Asn52 is glycosylated (N-linked (GlcNAc...) asparagine). The next 3 helical transmembrane spans lie at 56 to 76, 115 to 135, and 150 to 170; these read VHVT…TLIV, LFFG…VLII, and MGVN…VLWI.

Belongs to the UPF0220 family.

The protein resides in the vacuole membrane. It localises to the mitochondrion. Involved in vacuolar protein sorting. The chain is Vacuolar protein sorting-associated protein 68 (VPS68) from Saccharomyces cerevisiae (strain ATCC 204508 / S288c) (Baker's yeast).